Consider the following 101-residue polypeptide: Urease subunit beta (101 aa).

This sequence belongs to the urease beta subunit family. Heterotrimer of UreA (gamma), UreB (beta) and UreC (alpha) subunits. Three heterotrimers associate to form the active enzyme.

It is found in the cytoplasm. The catalysed reaction is urea + 2 H2O + H(+) = hydrogencarbonate + 2 NH4(+). The protein operates within nitrogen metabolism; urea degradation; CO(2) and NH(3) from urea (urease route): step 1/1. This Mesorhizobium japonicum (strain LMG 29417 / CECT 9101 / MAFF 303099) (Mesorhizobium loti (strain MAFF 303099)) protein is Urease subunit beta.